Reading from the N-terminus, the 837-residue chain is Intestinal mucin-like protein (837 aa).

Repeat copies occupy residues P17–T27, P28–T38, P39–T50, and P51–T62. A 5 X 11 AA approximate tandem repeats region spans residues P17–T70. The disordered stretch occupies residues P17 to L75. Residues T29 to T70 are compositionally biased toward low complexity. One copy of the 5; truncated repeat lies at P63 to T70. N91 and N164 each carry an N-linked (GlcNAc...) asparagine glycan. Positions C141–P324 constitute a VWFD domain. 3 disulfides stabilise this stretch: C143/C284, C165/C323, and C189/C197. Residues P149–K837 form a probably important for disulfide-bond mediated mucin polymerization (link domain) region. N-linked (GlcNAc...) asparagine glycans are attached at residues N278, N289, N344, N410, N444, N515, N538, N612, N627, N695, N727, and N749. VWFC domains are found at residues C472–K543 and G581–Q648. Disulfide bonds link C732/C779, C746/C793, C755/C809, and C759/C811. The CTCK domain occupies C732–E817.

Multimeric. In terms of tissue distribution, coats the epithelia of the intestines.

The protein resides in the secreted. This chain is Intestinal mucin-like protein, found in Rattus norvegicus (Rat).